A 478-amino-acid chain; its full sequence is Probable cytosolic Fe-S cluster assembly factor AAEL012261 (478 aa).

Positions 23, 69, 72, 75, 189, 245, 396, and 400 each coordinate [4Fe-4S] cluster.

The protein belongs to the NARF family.

Its function is as follows. Component of the cytosolic iron-sulfur (Fe/S) protein assembly machinery. Required for maturation of extramitochondrial Fe/S proteins. This is Probable cytosolic Fe-S cluster assembly factor AAEL012261 from Aedes aegypti (Yellowfever mosquito).